A 550-amino-acid polypeptide reads, in one-letter code: Dihydroxy-acid dehydratase (550 aa).

Aspartate 78 contacts Mg(2+). Cysteine 119 is a binding site for [2Fe-2S] cluster. The Mg(2+) site is built by aspartate 120 and lysine 121. N6-carboxylysine is present on lysine 121. Cysteine 191 provides a ligand contact to [2Fe-2S] cluster. Position 440 (glutamate 440) interacts with Mg(2+). Serine 466 acts as the Proton acceptor in catalysis.

Belongs to the IlvD/Edd family. Homodimer. It depends on [2Fe-2S] cluster as a cofactor. The cofactor is Mg(2+).

It carries out the reaction (2R)-2,3-dihydroxy-3-methylbutanoate = 3-methyl-2-oxobutanoate + H2O. It catalyses the reaction (2R,3R)-2,3-dihydroxy-3-methylpentanoate = (S)-3-methyl-2-oxopentanoate + H2O. Its pathway is amino-acid biosynthesis; L-isoleucine biosynthesis; L-isoleucine from 2-oxobutanoate: step 3/4. It functions in the pathway amino-acid biosynthesis; L-valine biosynthesis; L-valine from pyruvate: step 3/4. Functionally, functions in the biosynthesis of branched-chain amino acids. Catalyzes the dehydration of (2R,3R)-2,3-dihydroxy-3-methylpentanoate (2,3-dihydroxy-3-methylvalerate) into 2-oxo-3-methylpentanoate (2-oxo-3-methylvalerate) and of (2R)-2,3-dihydroxy-3-methylbutanoate (2,3-dihydroxyisovalerate) into 2-oxo-3-methylbutanoate (2-oxoisovalerate), the penultimate precursor to L-isoleucine and L-valine, respectively. The chain is Dihydroxy-acid dehydratase from Methanococcus maripaludis (strain C7 / ATCC BAA-1331).